Here is a 238-residue protein sequence, read N- to C-terminus: DNA repair protein RAD59 (238 aa).

Belongs to the RAD52 family. Interacts with RAD51 and RAD52.

It localises to the nucleus. In terms of biological role, involved in the repair of double-strand breaks in DNA during vegetative growth via recombination and single-strand annealing. Anneals complementary single-stranded DNA. This Saccharomyces cerevisiae (strain ATCC 204508 / S288c) (Baker's yeast) protein is DNA repair protein RAD59 (RAD59).